Consider the following 356-residue polypeptide: Histidinol-phosphate aminotransferase (356 aa).

The residue at position 222 (K222) is an N6-(pyridoxal phosphate)lysine.

Belongs to the class-II pyridoxal-phosphate-dependent aminotransferase family. Histidinol-phosphate aminotransferase subfamily. In terms of assembly, homodimer. Pyridoxal 5'-phosphate serves as cofactor.

The catalysed reaction is L-histidinol phosphate + 2-oxoglutarate = 3-(imidazol-4-yl)-2-oxopropyl phosphate + L-glutamate. It participates in amino-acid biosynthesis; L-histidine biosynthesis; L-histidine from 5-phospho-alpha-D-ribose 1-diphosphate: step 7/9. The sequence is that of Histidinol-phosphate aminotransferase from Lactiplantibacillus plantarum (strain ATCC BAA-793 / NCIMB 8826 / WCFS1) (Lactobacillus plantarum).